The sequence spans 566 residues: Chaperone Ric-8 (566 aa).

This sequence belongs to the synembryn family. Interacts with GDP-bound G(i)-alpha protein. Does not interact with G-alpha proteins when they are in complex with subunits beta and gamma. Interacts with Frq2 in a Ca(2+)-independent manner but does not interact with Frq1.

The protein resides in the cytoplasm. It is found in the cell cortex. The protein localises to the presynapse. Its function is as follows. Chaperone that specifically binds and folds some, but not all, nascent G alpha proteins prior to G protein heterotrimer formation, promoting their stability and activity. Also acts as a guanine nucleotide exchange factor (GEF) for G alpha proteins by stimulating exchange of bound GDP for free GTP. Plays a key role in asymmetric spindle positioning, a step for asymmetric cell division that generates cell diversity during development by activating G(i) alpha protein independently of G-protein coupled receptors. Required during gastrulation and sensory organ precursor (SOP) formation. Plays a role in positively regulating synapse number and neurotransmitter release. The sequence is that of Chaperone Ric-8 (ric8a) from Drosophila pseudoobscura pseudoobscura (Fruit fly).